We begin with the raw amino-acid sequence, 174 residues long: Superoxide dismutase [Cu-Zn] (174 aa).

The signal sequence occupies residues 1 to 23 (MIRLSAAAALGLAAALAASPALA). The Cu cation site is built by histidine 68, histidine 70, and histidine 86. An intrachain disulfide couples cysteine 75 to cysteine 170. Zn(2+)-binding residues include histidine 86, histidine 95, aspartate 104, and aspartate 107. Histidine 150 provides a ligand contact to Cu cation.

This sequence belongs to the Cu-Zn superoxide dismutase family. In terms of assembly, homodimer. The cofactor is Cu cation. Zn(2+) is required as a cofactor.

The protein resides in the periplasm. It carries out the reaction 2 superoxide + 2 H(+) = H2O2 + O2. In terms of biological role, destroys radicals which are normally produced within the cells and which are toxic to biological systems. May function against extracytoplasmic toxic oxygen species. This is Superoxide dismutase [Cu-Zn] (sodC) from Caulobacter vibrioides (strain ATCC 19089 / CIP 103742 / CB 15) (Caulobacter crescentus).